The chain runs to 691 residues: Elongation factor G (691 aa).

Positions Lys-8 to Asp-283 constitute a tr-type G domain. GTP contacts are provided by residues Ala-17–Thr-24, Asp-81–His-85, and Asn-135–Asp-138.

It belongs to the TRAFAC class translation factor GTPase superfamily. Classic translation factor GTPase family. EF-G/EF-2 subfamily.

It localises to the cytoplasm. In terms of biological role, catalyzes the GTP-dependent ribosomal translocation step during translation elongation. During this step, the ribosome changes from the pre-translocational (PRE) to the post-translocational (POST) state as the newly formed A-site-bound peptidyl-tRNA and P-site-bound deacylated tRNA move to the P and E sites, respectively. Catalyzes the coordinated movement of the two tRNA molecules, the mRNA and conformational changes in the ribosome. This is Elongation factor G from Campylobacter jejuni subsp. jejuni serotype O:6 (strain 81116 / NCTC 11828).